The chain runs to 211 residues: Putative 3-methyladenine DNA glycosylase (211 aa).

Belongs to the DNA glycosylase MPG family.

This is Putative 3-methyladenine DNA glycosylase from Granulibacter bethesdensis (strain ATCC BAA-1260 / CGDNIH1).